The primary structure comprises 596 residues: Deuterosome assembly protein 1 (596 aa).

Coiled-coil stretches lie at residues 8–68 (IARN…NHEI), 130–180 (CELQ…FQKE), and 227–284 (IENL…DLLR). A compositionally biased stretch (polar residues) spans 297 to 306 (TANLANQKTA). The tract at residues 297–316 (TANLANQKTAQGEEASFQVT) is disordered. The stretch at 337–402 (SEKYQAENDL…LKGAQNRQTS (66 aa)) forms a coiled coil. A disordered region spans residues 447–467 (DKPQKHRSFHGENNSLKPTNY). The segment covering 457–467 (GENNSLKPTNY) has biased composition (polar residues).

Belongs to the CEP63 family.

Its subcellular location is the cytoplasm. Its function is as follows. Key structural component of the deuterosome, a structure that promotes de novo centriole amplification in multiciliated cells. Deuterosome-mediated centriole amplification occurs in terminally differentiated multiciliated cells and can generate more than 100 centrioles. Probably sufficient for the specification and formation of the deuterosome inner core. This Xenopus tropicalis (Western clawed frog) protein is Deuterosome assembly protein 1.